The following is a 336-amino-acid chain: tRNA N6-adenosine threonylcarbamoyltransferase (336 aa).

Positions 114 and 118 each coordinate Fe cation. Residues 136 to 140, Asp169, Gly182, Asp186, and Asn275 contribute to the substrate site; that span reads LVSGG. Asp301 contacts Fe cation.

Belongs to the KAE1 / TsaD family. The cofactor is Fe(2+).

The protein resides in the cytoplasm. The catalysed reaction is L-threonylcarbamoyladenylate + adenosine(37) in tRNA = N(6)-L-threonylcarbamoyladenosine(37) in tRNA + AMP + H(+). Required for the formation of a threonylcarbamoyl group on adenosine at position 37 (t(6)A37) in tRNAs that read codons beginning with adenine. Is involved in the transfer of the threonylcarbamoyl moiety of threonylcarbamoyl-AMP (TC-AMP) to the N6 group of A37, together with TsaE and TsaB. TsaD likely plays a direct catalytic role in this reaction. The chain is tRNA N6-adenosine threonylcarbamoyltransferase from Streptococcus pneumoniae serotype 2 (strain D39 / NCTC 7466).